The sequence spans 80 residues: RNA-binding protein Hfq (80 aa).

Residues 10–70 (DLFLNTVRKQ…ISTIMPGQPM (61 aa)) enclose the Sm domain.

Belongs to the Hfq family. As to quaternary structure, homohexamer.

RNA chaperone that binds small regulatory RNA (sRNAs) and mRNAs to facilitate mRNA translational regulation in response to envelope stress, environmental stress and changes in metabolite concentrations. Also binds with high specificity to tRNAs. This is RNA-binding protein Hfq from Rhizobium etli (strain CIAT 652).